A 269-amino-acid chain; its full sequence is Shikimate dehydrogenase (NADP(+)) (269 aa).

Residues 17–19 and Thr-64 contribute to the shikimate site; that span reads SKS. The active-site Proton acceptor is the Lys-68. NADP(+) is bound at residue Glu-80. Asn-89 and Asp-105 together coordinate shikimate. NADP(+)-binding positions include 130–134, 154–159, and Met-213; these read GAGGA and NRTRAK. Tyr-215 provides a ligand contact to shikimate. Gly-237 lines the NADP(+) pocket.

This sequence belongs to the shikimate dehydrogenase family. As to quaternary structure, homodimer.

It carries out the reaction shikimate + NADP(+) = 3-dehydroshikimate + NADPH + H(+). It participates in metabolic intermediate biosynthesis; chorismate biosynthesis; chorismate from D-erythrose 4-phosphate and phosphoenolpyruvate: step 4/7. Its function is as follows. Involved in the biosynthesis of the chorismate, which leads to the biosynthesis of aromatic amino acids. Catalyzes the reversible NADPH linked reduction of 3-dehydroshikimate (DHSA) to yield shikimate (SA). The polypeptide is Shikimate dehydrogenase (NADP(+)) (Neisseria lactamica).